The primary structure comprises 466 residues: Peptidyl-prolyl cis-trans isomerase CYP37, chloroplastic (466 aa).

The N-terminal 65 residues, 1–65 (MASPLSSSTV…GTKELIHSCN (65 aa)), are a transit peptide targeting the chloroplast. Residues 66-114 (SSIDSKLNTFEAGSKNLEKLVATILIFVQVWSPLPLFGLDSAYISPAEA) constitute a thylakoid transit peptide. Residues 278–466 (TFSAEAGGDQ…VQNNNINEST (189 aa)) form the PPIase cyclophilin-type domain.

As to expression, aerial parts.

It is found in the plastid. Its subcellular location is the chloroplast thylakoid lumen. It catalyses the reaction [protein]-peptidylproline (omega=180) = [protein]-peptidylproline (omega=0). PPIases accelerate the folding of proteins. It catalyzes the cis-trans isomerization of proline imidic peptide bonds in oligopeptides. This Arabidopsis thaliana (Mouse-ear cress) protein is Peptidyl-prolyl cis-trans isomerase CYP37, chloroplastic (CYP37).